Consider the following 176-residue polypeptide: NADH-quinone oxidoreductase subunit I 1 (176 aa).

4Fe-4S ferredoxin-type domains follow at residues isoleucine 45 to threonine 77 and arginine 87 to aspartate 116. Cysteine 57, cysteine 60, cysteine 63, cysteine 67, cysteine 96, cysteine 99, cysteine 102, and cysteine 106 together coordinate [4Fe-4S] cluster.

The protein belongs to the complex I 23 kDa subunit family. NDH-1 is composed of 14 different subunits. Subunits NuoA, H, J, K, L, M, N constitute the membrane sector of the complex. The cofactor is [4Fe-4S] cluster.

It is found in the cell inner membrane. The catalysed reaction is a quinone + NADH + 5 H(+)(in) = a quinol + NAD(+) + 4 H(+)(out). NDH-1 shuttles electrons from NADH, via FMN and iron-sulfur (Fe-S) centers, to quinones in the respiratory chain. The immediate electron acceptor for the enzyme in this species is believed to be ubiquinone. Couples the redox reaction to proton translocation (for every two electrons transferred, four hydrogen ions are translocated across the cytoplasmic membrane), and thus conserves the redox energy in a proton gradient. The sequence is that of NADH-quinone oxidoreductase subunit I 1 from Geobacter metallireducens (strain ATCC 53774 / DSM 7210 / GS-15).